Consider the following 245-residue polypeptide: Eukaryotic translation initiation factor 6 (245 aa).

This sequence belongs to the eIF-6 family. Monomer. Associates with the 60S ribosomal subunit.

It is found in the cytoplasm. Its subcellular location is the nucleus. The protein resides in the nucleolus. Its function is as follows. Binds to the 60S ribosomal subunit and prevents its association with the 40S ribosomal subunit to form the 80S initiation complex in the cytoplasm. May also be involved in ribosome biogenesis. The polypeptide is Eukaryotic translation initiation factor 6 (eif6) (Danio rerio (Zebrafish)).